The sequence spans 464 residues: Chitobiosyldiphosphodolichol beta-mannosyltransferase (464 aa).

The Lumenal portion of the chain corresponds to 1–2; sequence MA. The helical transmembrane segment at 3–23 threads the bilayer; the sequence is ASCLVLLALCLLLPLLLLGGW. Over 24-99 the chain is Cytoplasmic; it reads KRWRRGRAAR…ELQSLAVGPR (76 aa). The helical intramembrane region spans 100–120; sequence VFQYGVKVVLQAMYLLWKLMW. At 121–464 the chain is on the cytoplasmic side; the sequence is REPGAYIFLQ…QTVLPLVMDT (344 aa). S242 is modified (phosphoserine). Residues 243 to 262 are disordered; sequence PFRARSEPEDPVTERSAFTE.

Belongs to the glycosyltransferase group 1 family. Glycosyltransferase 33 subfamily.

The protein resides in the endoplasmic reticulum membrane. It catalyses the reaction an N,N'-diacetylchitobiosyl-diphospho-di-trans,poly-cis-dolichol + GDP-alpha-D-mannose = a beta-D-Man-(1-&gt;4)-beta-D-GlcNAc-(1-&gt;4)-alpha-D-GlcNAc-diphospho-di-trans,poly-cis-dolichol + GDP + H(+). The protein operates within protein modification; protein glycosylation. Functionally, mannosyltransferase that operates in the biosynthetic pathway of dolichol-linked oligosaccharides, the glycan precursors employed in protein asparagine (N)-glycosylation. The assembly of dolichol-linked oligosaccharides begins on the cytosolic side of the endoplasmic reticulum membrane and finishes in its lumen. The sequential addition of sugars to dolichol pyrophosphate produces dolichol-linked oligosaccharides containing fourteen sugars, including two GlcNAcs, nine mannoses and three glucoses. Once assembled, the oligosaccharide is transferred from the lipid to nascent proteins by oligosaccharyltransferases. Catalyzes, on the cytoplasmic face of the endoplasmic reticulum, the addition of the first mannose residues to the dolichol-linked oligosaccharide chain, to produce Man1GlcNAc(2)-PP-dolichol core oligosaccharide. Man1GlcNAc(2)-PP-dolichol is a substrate for ALG2, the following enzyme in the biosynthetic pathway. The chain is Chitobiosyldiphosphodolichol beta-mannosyltransferase from Homo sapiens (Human).